The following is a 364-amino-acid chain: Large ribosomal subunit protein uL22m (364 aa).

It belongs to the universal ribosomal protein uL22 family. Component of the mitochondrial large ribosomal subunit (mt-LSU). Mature N.crassa 74S mitochondrial ribosomes consist of a small (37S) and a large (54S) subunit. The 37S small subunit contains a 16S ribosomal RNA (16S mt-rRNA) and 32 different proteins. The 54S large subunit contains a 23S rRNA (23S mt-rRNA) and 42 different proteins. uL22m forms the wall of the exit tunnel.

It is found in the mitochondrion. In terms of biological role, component of the mitochondrial ribosome (mitoribosome), a dedicated translation machinery responsible for the synthesis of mitochondrial genome-encoded proteins, including at least some of the essential transmembrane subunits of the mitochondrial respiratory chain. The mitoribosomes are attached to the mitochondrial inner membrane and translation products are cotranslationally integrated into the membrane. In Neurospora crassa (strain ATCC 24698 / 74-OR23-1A / CBS 708.71 / DSM 1257 / FGSC 987), this protein is Large ribosomal subunit protein uL22m (mrpl22).